The sequence spans 144 residues: MESSLGSDLARLVRIWRALIDYRLKPLKLTQTHWITLHNIYQLPPDQSQIQLAKAIGIEQPSLVRTLDQLESKGLIVRNICSNDRRAKRITLTELAKPVINQVNQVINVTRNEVFYGLRVEEIQQLNNIIAKLERNIINLYNKT.

Positions 2–135 constitute an HTH marR-type domain; it reads ESSLGSDLAR…LNNIIAKLER (134 aa). The segment at residues 49 to 72 is a DNA-binding region (H-T-H motif); that stretch reads QIQLAKAIGIEQPSLVRTLDQLES.

It belongs to the SlyA family. As to quaternary structure, homodimer.

Its function is as follows. Transcription regulator that can specifically activate or repress expression of target genes. The chain is Transcriptional regulator SlyA from Blochmanniella floridana.